The primary structure comprises 239 residues: Probable inner membrane transporter protein TsaS (239 aa).

The next 4 helical transmembrane spans lie at 65–85, 128–148, 160–180, and 186–206; these read AIGAILPGMAVGALIGLWLMG, GLVGVLEVMFATAGPMVIALL, ATVPVVMVVAASIAIAVLFGA, and AHTFERWLVALPIAFMGVVLG.

The protein belongs to the 4-toluene sulfonate uptake permease (TSUP) (TC 2.A.102) family. As to quaternary structure, part of a two-component transport system composed of TsaT and TsaS.

It is found in the cell inner membrane. Its function is as follows. Involved in the uptake of p-toluenesulphonate (TSA). This is Probable inner membrane transporter protein TsaS (tsaS) from Comamonas testosteroni (Pseudomonas testosteroni).